The primary structure comprises 383 residues: MTDRNEFLNDINKIVIKIGTSSLTKQNCDSTKENCSIDPTFIENIAAQVSELRKLGKEVIVVSSGAIGVGLYELGIAPKPREIPIRQAAAAVGQSILMQYWSEAFSKHGIKVAQILLTYEFYSDRVSYLNLRNSISTLLEYGVVPIINENDCTCTNEIEAIFGDNDKLSAMVASKIDADLLIILSDIDGLFDKNPKIHEDARLISLVEKITPEIESYGGDPTSFKGVGGMRTKIKAAKICSMAGCYVLIANSEIEDVLLKVLSGKEIGTLFLAERHIQKNRARWIILSRASGTIRVDAGAKAAVLGKNSLLSAGVVDVEGNFDRGDVVRLECEGRVFAKGITDYTSEELMKIKGAHTDEIEGILGYNNYSNVIKKENIGIMEN.

K17 provides a ligand contact to ATP. The substrate site is built by S64, D151, and N165. 185 to 186 contacts ATP; sequence SD. In terms of domain architecture, PUA spans 291-367; that stretch reads SGTIRVDAGA…DEIEGILGYN (77 aa).

Belongs to the glutamate 5-kinase family.

It localises to the cytoplasm. The catalysed reaction is L-glutamate + ATP = L-glutamyl 5-phosphate + ADP. Its pathway is amino-acid biosynthesis; L-proline biosynthesis; L-glutamate 5-semialdehyde from L-glutamate: step 1/2. In terms of biological role, catalyzes the transfer of a phosphate group to glutamate to form L-glutamate 5-phosphate. The chain is Glutamate 5-kinase from Methanosarcina barkeri (strain Fusaro / DSM 804).